Here is a 135-residue protein sequence, read N- to C-terminus: Protein NrdI (135 aa).

This sequence belongs to the NrdI family.

Functionally, probably involved in ribonucleotide reductase function. This chain is Protein NrdI, found in Pectobacterium carotovorum subsp. carotovorum (strain PC1).